Here is a 928-residue protein sequence, read N- to C-terminus: Probable outer membrane protein pmp10 (928 aa).

The first 25 residues, 1-25, serve as a signal peptide directing secretion; the sequence is MKSQFSWLVLSSTLACFTSCSTVFA. The region spanning 635-928 is the Autotransporter domain; it reads TLCSDRGFWA…NVDLGGKFQF (294 aa).

The protein belongs to the PMP outer membrane protein family.

It localises to the secreted. The protein resides in the cell wall. Its subcellular location is the cell outer membrane. This is Probable outer membrane protein pmp10 (pmp10) from Chlamydia pneumoniae (Chlamydophila pneumoniae).